The primary structure comprises 352 residues: Histidinol-phosphate aminotransferase (352 aa).

The residue at position 221 (Lys221) is an N6-(pyridoxal phosphate)lysine.

Belongs to the class-II pyridoxal-phosphate-dependent aminotransferase family. Histidinol-phosphate aminotransferase subfamily. In terms of assembly, homodimer. Pyridoxal 5'-phosphate is required as a cofactor.

The catalysed reaction is L-histidinol phosphate + 2-oxoglutarate = 3-(imidazol-4-yl)-2-oxopropyl phosphate + L-glutamate. It functions in the pathway amino-acid biosynthesis; L-histidine biosynthesis; L-histidine from 5-phospho-alpha-D-ribose 1-diphosphate: step 7/9. The protein is Histidinol-phosphate aminotransferase of Staphylococcus aureus (strain MSSA476).